The chain runs to 688 residues: Glycine--tRNA ligase beta subunit (688 aa).

It belongs to the class-II aminoacyl-tRNA synthetase family. As to quaternary structure, tetramer of two alpha and two beta subunits.

The protein localises to the cytoplasm. It catalyses the reaction tRNA(Gly) + glycine + ATP = glycyl-tRNA(Gly) + AMP + diphosphate. The polypeptide is Glycine--tRNA ligase beta subunit (Chromohalobacter salexigens (strain ATCC BAA-138 / DSM 3043 / CIP 106854 / NCIMB 13768 / 1H11)).